Consider the following 409-residue polypeptide: Tryptophan synthase beta chain (409 aa).

Lys86 is modified (N6-(pyridoxal phosphate)lysine).

Belongs to the TrpB family. Tetramer of two alpha and two beta chains. Pyridoxal 5'-phosphate serves as cofactor.

The catalysed reaction is (1S,2R)-1-C-(indol-3-yl)glycerol 3-phosphate + L-serine = D-glyceraldehyde 3-phosphate + L-tryptophan + H2O. It functions in the pathway amino-acid biosynthesis; L-tryptophan biosynthesis; L-tryptophan from chorismate: step 5/5. Functionally, the beta subunit is responsible for the synthesis of L-tryptophan from indole and L-serine. The chain is Tryptophan synthase beta chain from Shewanella pealeana (strain ATCC 700345 / ANG-SQ1).